The primary structure comprises 270 residues: Pancreas transcription factor 1 subunit alpha (270 aa).

Residues 119-171 (QLRQAANVRERRRMQSINDAFEGLRSHIPTLPYEKRLSKVDTLRLAIGYINFL) enclose the bHLH domain.

The protein localises to the nucleus. Functionally, transcription factor implicated in the cell fate determination in various organs. Binds to the E-box consensus sequence 5'-CANNTG-3'. Acts together with pdx1 to induce the pancreatic lineage within the endoderm. Plays a central role in directing the differentiation of retinal progenitors towards horizontal and amacrine fates. The chain is Pancreas transcription factor 1 subunit alpha (ptf1a) from Xenopus laevis (African clawed frog).